Reading from the N-terminus, the 182-residue chain is ATP synthase subunit b, chloroplastic (182 aa).

Residues 36–56 traverse the membrane as a helical segment; sequence ILLLLLGLMYVLKEFLGSILV.

It belongs to the ATPase B chain family. F-type ATPases have 2 components, F(1) - the catalytic core - and F(0) - the membrane proton channel. F(1) has five subunits: alpha(3), beta(3), gamma(1), delta(1), epsilon(1). F(0) has four main subunits: a(1), b(1), b'(1) and c(10-14). The alpha and beta chains form an alternating ring which encloses part of the gamma chain. F(1) is attached to F(0) by a central stalk formed by the gamma and epsilon chains, while a peripheral stalk is formed by the delta, b and b' chains.

It localises to the plastid. The protein localises to the chloroplast thylakoid membrane. Its function is as follows. F(1)F(0) ATP synthase produces ATP from ADP in the presence of a proton or sodium gradient. F-type ATPases consist of two structural domains, F(1) containing the extramembraneous catalytic core and F(0) containing the membrane proton channel, linked together by a central stalk and a peripheral stalk. During catalysis, ATP synthesis in the catalytic domain of F(1) is coupled via a rotary mechanism of the central stalk subunits to proton translocation. Component of the F(0) channel, it forms part of the peripheral stalk, linking F(1) to F(0). The protein is ATP synthase subunit b, chloroplastic of Gracilaria tenuistipitata var. liui (Red alga).